The following is a 92-amino-acid chain: MLTINSDAKLKDLLEFPCSFTYKVMGYAKPELPEKVLEVIQRHAPGDYSPAVKPSAKGNYHSVSINITATSIEQVETLYKELGEIDIVRMVL.

It belongs to the UPF0250 family.

This Vibrio vulnificus (strain YJ016) protein is UPF0250 protein VV0902.